A 379-amino-acid chain; its full sequence is Queuine tRNA-ribosyltransferase (379 aa).

Catalysis depends on D94, which acts as the Proton acceptor. Substrate contacts are provided by residues D94–F98, D148, Q191, and G218. Residues G249–A255 form an RNA binding region. Residue D268 is the Nucleophile of the active site. An RNA binding; important for wobble base 34 recognition region spans residues T273–R277. The Zn(2+) site is built by C306, C308, C311, and H337.

It belongs to the queuine tRNA-ribosyltransferase family. As to quaternary structure, homodimer. Within each dimer, one monomer is responsible for RNA recognition and catalysis, while the other monomer binds to the replacement base PreQ1. Zn(2+) serves as cofactor.

The catalysed reaction is 7-aminomethyl-7-carbaguanine + guanosine(34) in tRNA = 7-aminomethyl-7-carbaguanosine(34) in tRNA + guanine. It functions in the pathway tRNA modification; tRNA-queuosine biosynthesis. Catalyzes the base-exchange of a guanine (G) residue with the queuine precursor 7-aminomethyl-7-deazaguanine (PreQ1) at position 34 (anticodon wobble position) in tRNAs with GU(N) anticodons (tRNA-Asp, -Asn, -His and -Tyr). Catalysis occurs through a double-displacement mechanism. The nucleophile active site attacks the C1' of nucleotide 34 to detach the guanine base from the RNA, forming a covalent enzyme-RNA intermediate. The proton acceptor active site deprotonates the incoming PreQ1, allowing a nucleophilic attack on the C1' of the ribose to form the product. After dissociation, two additional enzymatic reactions on the tRNA convert PreQ1 to queuine (Q), resulting in the hypermodified nucleoside queuosine (7-(((4,5-cis-dihydroxy-2-cyclopenten-1-yl)amino)methyl)-7-deazaguanosine). The chain is Queuine tRNA-ribosyltransferase from Oceanobacillus iheyensis (strain DSM 14371 / CIP 107618 / JCM 11309 / KCTC 3954 / HTE831).